Consider the following 230-residue polypeptide: Large ribosomal subunit protein uL1 (230 aa).

Belongs to the universal ribosomal protein uL1 family. As to quaternary structure, part of the 50S ribosomal subunit.

Binds directly to 23S rRNA. The L1 stalk is quite mobile in the ribosome, and is involved in E site tRNA release. Its function is as follows. Protein L1 is also a translational repressor protein, it controls the translation of the L11 operon by binding to its mRNA. The protein is Large ribosomal subunit protein uL1 of Bacillus anthracis (strain A0248).